Reading from the N-terminus, the 373-residue chain is Glutamine synthetase (373 aa).

Alanine 2 carries the N-acetylalanine modification. Residues 2–25 (ATSASSHLNKGIKQMYMSLPQGEK) are required for glutamine-induced ubiquitination by CRL4(CRBN) and proteasomal degradation. Residues lysine 11 and lysine 14 each carry the N6-acetyllysine modification. The region spanning 24–106 (EKVQAMYIWV…VFCEVFKYNQ (83 aa)) is the GS beta-grasp domain. Tyrosine 104 carries the phosphotyrosine modification. The region spanning 113 to 373 (LRHTCKRIMD…TGDQPFQYKN (261 aa)) is the GS catalytic domain. Residue glutamate 134 coordinates ATP. Mn(2+)-binding residues include glutamate 134, glutamate 136, glutamate 196, and glutamate 203. ATP is bound at residue 203-208 (EFQIGP). An L-glutamate-binding site is contributed by 246 to 247 (NW). Histidine 253 is a binding site for Mn(2+). ATP is bound by residues 255 to 257 (NFS), arginine 319, and arginine 324. Position 319 (arginine 319) interacts with L-glutamate. 336–338 (YFE) contributes to the ADP binding site. Position 338 (glutamate 338) interacts with Mn(2+). Arginine 340 contacts L-glutamate. Phosphoserine is present on serine 343.

It belongs to the glutamine synthetase family. Decamer; composed of two pentamers. Interacts with PALMD. Interacts with RHOJ. Interacts with BEST2; this interaction tethers a fraction of GLUL to the membrane, causing a decrease of cytosolic glutamine synthase (GS) activity and inhibits the chloride channel activity of BEST2 by affecting the gating at the aperture in the absence of intracellular glutamate. Requires Mg(2+) as cofactor. Mn(2+) serves as cofactor. In terms of processing, palmitoylated; undergoes autopalmitoylation. Acetylated by EP300/p300; acetylation is stimulated by increased glutamine levels and promotes ubiquitin-mediated proteasomal degradation. Post-translationally, ubiquitinated by ZNRF1. Ubiquitinated by the DCX (DDB1-CUL4-X-box) E3 ubiquitin-protein ligase complex called CRL4(CRBN), leading to proteasomal degradation.

Its subcellular location is the cytoplasm. It localises to the cytosol. The protein resides in the microsome. The protein localises to the mitochondrion. It is found in the cell membrane. It catalyses the reaction L-glutamate + NH4(+) + ATP = L-glutamine + ADP + phosphate + H(+). The enzyme catalyses L-cysteinyl-[protein] + hexadecanoyl-CoA = S-hexadecanoyl-L-cysteinyl-[protein] + CoA. Glutamine synthetase activity is inhibited by methionine sulfoximine (MSO). Its function is as follows. Glutamine synthetase that catalyzes the ATP-dependent conversion of glutamate and ammonia to glutamine. Its role depends on tissue localization: in the brain, it regulates the levels of toxic ammonia and converts neurotoxic glutamate to harmless glutamine, whereas in the liver, it is one of the enzymes responsible for the removal of ammonia. Plays a key role in ammonium detoxification during erythropoiesis: the glutamine synthetase activity is required to remove ammonium generated by porphobilinogen deaminase (HMBS) during heme biosynthesis to prevent ammonium accumulation and oxidative stress. Essential for proliferation of fetal skin fibroblasts. Independently of its glutamine synthetase activity, required for endothelial cell migration during vascular development. Involved in angiogenesis by regulating membrane localization and activation of the GTPase RHOJ, possibly by promoting RHOJ palmitoylation. May act as a palmitoyltransferase for RHOJ: able to autopalmitoylate and then transfer the palmitoyl group to RHOJ. Plays a role in ribosomal 40S subunit biogenesis. Through the interaction with BEST2, inhibits BEST2 channel activity by affecting the gating at the aperture in the absence of intracellular L-glutamate, but sensitizes BEST2 to intracellular L-glutamate, which promotes the opening of BEST2 and thus relieves its inhibitory effect on BEST2. This is Glutamine synthetase from Cricetulus griseus (Chinese hamster).